We begin with the raw amino-acid sequence, 104 residues long: Type IV secretion system protein PtlB homolog (104 aa).

Residues 30–50 traverse the membrane as a helical segment; that stretch reads IALLGIWFSIAFLALFPVALL.

Belongs to the virB3 family.

It localises to the cell membrane. This chain is Type IV secretion system protein PtlB homolog (ptlB), found in Bordetella bronchiseptica (strain ATCC BAA-588 / NCTC 13252 / RB50) (Alcaligenes bronchisepticus).